Here is a 563-residue protein sequence, read N- to C-terminus: MIKSTNIQVIGSGIMHQINNIHSLTLFSLPVSLSPSCNEYYLKVWSEWERNGTPGEQRNIAFNRLKICLQNQEAELNLSELDLKTLPDLPPQITTLEIRKNLLTHLPDLPPMLKVIHAQFNQLESLPALPETLEELNAGDNKIKELPFLPENLTHLRVHNNRLHILPLLPPELKLLVVSGNRLDSIPPFPDKLEGLALANNFIEQLPELPFSMNRAVLMNNNLTTLPESVLRLAQNAFVNVAGNPLSGHTMRTLQQITTGPDYSGPQIFFSMGNSATISAPEHSLADAVTAWFPENKQSDVSQIWHAFEHEEHANTFSAFLDRLSDTVSARNTSGFREQVAAWLEKLSASAELRQQSFAVAADATESCEDRVALTWNNLRKTLLVHQASEGLFDNDTGALLSLGREMFRLEILEDIARDKVRTLHFVDEIEVYLAFQTMLAEKLQLSTAVKEMRFYGVSGVTANDLRTAEAMVRSREENEFTDWFSLWGPWHAVLKRTEADRWAQAEEQKYEMLENEYSQRVADRLKASGLSGDADAEREAGAQVMRETEQQIYRQLTDEVLA.

The segment at 1-270 is interaction with target proteins; it reads MIKSTNIQVI…PDYSGPQIFF (270 aa). 8 LRR repeats span residues 69–90, 91–115, 117–130, 131–150, 151–170, 171–195, 197–209, and 210–233; these read LQNQ…PDLP, PQIT…MLKV, HAQF…PALP, ETLE…PFLP, ENLT…PLLP, PELK…KLEG, ALAN…LPEL, and PFSM…VLRL. A linker region spans residues 271 to 281; sequence SMGNSATISAP. Positions 282 to 563 are E3 ubiquitin-protein ligase catalytic domain; it reads EHSLADAVTA…YRQLTDEVLA (282 aa). In terms of domain architecture, NEL spans 284–563; sequence SLADAVTAWF…YRQLTDEVLA (280 aa). Catalysis depends on C368, which acts as the Glycyl thioester intermediate.

It belongs to the LRR-containing bacterial E3 ligase family. In terms of assembly, interacts with human RBCK1/HOIL-1 and RNF31/HOIP components of the LUBAC complex. Post-translationally, ubiquitinated in the presence of host E1 ubiquitin-activating enzyme, E2 ubiquitin-conjugating enzyme and ubiquitin.

It is found in the secreted. The protein localises to the host cytoplasm. The catalysed reaction is S-ubiquitinyl-[E2 ubiquitin-conjugating enzyme]-L-cysteine + [acceptor protein]-L-lysine = [E2 ubiquitin-conjugating enzyme]-L-cysteine + N(6)-ubiquitinyl-[acceptor protein]-L-lysine.. It participates in protein modification; protein ubiquitination. With respect to regulation, exists in an autoinhibited state in the absence of substrate protein, probably due to interactions of the leucine-rich repeat domain with the catalytic domain. Is activated upon binding to a substrate protein. Functionally, E3 ubiquitin-protein ligase effector that inhibits host cell innate immunity during bacterial infection by catalyzing 'Lys-48'-linked polyubiquitination and subsequent degradation of host RNF31/HOIP. Host RNF31/HOIP is the catalytic component of the LUBAC complex, which conjugates linear ('Met-1'-linked) polyubiquitin chains at the surface of bacteria invading the host cytosol to form the ubiquitin coat surrounding bacteria. The bacterial ubiquitin coat acts as an 'eat-me' signal for xenophagy and promotes NF-kappa-B activation. The protein is E3 ubiquitin-protein ligase IpaH2.5 of Shigella flexneri.